The primary structure comprises 132 residues: uncharacterized protein (132 aa).

2 helical membrane passes run 44-64 (FMSF…FTFI) and 75-95 (IAMI…AMLF).

The protein resides in the cytoplasm. It localises to the membrane. This is an uncharacterized protein from Schizosaccharomyces pombe (strain 972 / ATCC 24843) (Fission yeast).